The primary structure comprises 213 residues: ATP-dependent Clp protease proteolytic subunit 1 (213 aa).

S108 serves as the catalytic Nucleophile. The active site involves H133.

It belongs to the peptidase S14 family. In terms of assembly, fourteen ClpP subunits assemble into 2 heptameric rings which stack back to back to give a disk-like structure with a central cavity, resembling the structure of eukaryotic proteasomes.

Its subcellular location is the cytoplasm. The enzyme catalyses Hydrolysis of proteins to small peptides in the presence of ATP and magnesium. alpha-casein is the usual test substrate. In the absence of ATP, only oligopeptides shorter than five residues are hydrolyzed (such as succinyl-Leu-Tyr-|-NHMec, and Leu-Tyr-Leu-|-Tyr-Trp, in which cleavage of the -Tyr-|-Leu- and -Tyr-|-Trp bonds also occurs).. Its function is as follows. Cleaves peptides in various proteins in a process that requires ATP hydrolysis. Has a chymotrypsin-like activity. Plays a major role in the degradation of misfolded proteins. The chain is ATP-dependent Clp protease proteolytic subunit 1 from Frankia casuarinae (strain DSM 45818 / CECT 9043 / HFP020203 / CcI3).